The chain runs to 163 residues: 3-isopropylmalate dehydratase small subunit (163 aa).

It belongs to the LeuD family. LeuD type 2 subfamily. In terms of assembly, heterodimer of LeuC and LeuD.

It carries out the reaction (2R,3S)-3-isopropylmalate = (2S)-2-isopropylmalate. It functions in the pathway amino-acid biosynthesis; L-leucine biosynthesis; L-leucine from 3-methyl-2-oxobutanoate: step 2/4. Its function is as follows. Catalyzes the isomerization between 2-isopropylmalate and 3-isopropylmalate, via the formation of 2-isopropylmaleate. This is 3-isopropylmalate dehydratase small subunit from Brachyspira hyodysenteriae (strain ATCC 49526 / WA1).